Reading from the N-terminus, the 537-residue chain is Lysine--tRNA ligase (537 aa).

Residues 30 to 38 (PSGNIHIGN) carry the 'HIGH' region motif. Residues 276–280 (AMSSS) carry the 'KMSKS' region motif.

It belongs to the class-I aminoacyl-tRNA synthetase family.

Its subcellular location is the cytoplasm. It carries out the reaction tRNA(Lys) + L-lysine + ATP = L-lysyl-tRNA(Lys) + AMP + diphosphate. The protein is Lysine--tRNA ligase of Methanosarcina barkeri (strain Fusaro / DSM 804).